A 101-amino-acid polypeptide reads, in one-letter code: NAD(P)H-quinone oxidoreductase subunit 4L, chloroplastic (101 aa).

Helical transmembrane passes span 2–22, 32–52, and 61–81; these read MTEYVLILSAYLFSIGIYGLI, MCLELILNAVNMNLVTFSDLF, and IFSIFVIAIAAAEAAIGPAIV.

Belongs to the complex I subunit 4L family. In terms of assembly, NDH is composed of at least 16 different subunits, 5 of which are encoded in the nucleus.

It localises to the plastid. It is found in the chloroplast thylakoid membrane. The catalysed reaction is a plastoquinone + NADH + (n+1) H(+)(in) = a plastoquinol + NAD(+) + n H(+)(out). It catalyses the reaction a plastoquinone + NADPH + (n+1) H(+)(in) = a plastoquinol + NADP(+) + n H(+)(out). Functionally, NDH shuttles electrons from NAD(P)H:plastoquinone, via FMN and iron-sulfur (Fe-S) centers, to quinones in the photosynthetic chain and possibly in a chloroplast respiratory chain. The immediate electron acceptor for the enzyme in this species is believed to be plastoquinone. Couples the redox reaction to proton translocation, and thus conserves the redox energy in a proton gradient. This Calycanthus floridus var. glaucus (Eastern sweetshrub) protein is NAD(P)H-quinone oxidoreductase subunit 4L, chloroplastic.